We begin with the raw amino-acid sequence, 248 residues long: MTETARTTIDASEIEHFSRIAAQWWDPQGKFRPLHKFNPTRLAYIKEKVCAKFNRDPNAPRPLEGLRFLDIGCGGGLLCEPMARLGATVIGADASATNIEVAKIHAAQSSLDIDYRATTTEALADAGEKFDVVLNMEVVEHVSDVDLFMSATSAMVKPGGLMFVATINRTLKAYGLAIIGAEYVLRWLPRGTHQYEKLVRPEELEAAFSKADLRLIDKLGVTYNPLADSWNRSRDMDVNYMVLAERPA.

The S-adenosyl-L-methionine site is built by Arg41, Gly72, Asp93, and Met136.

It belongs to the methyltransferase superfamily. UbiG/COQ3 family.

It carries out the reaction a 3-demethylubiquinol + S-adenosyl-L-methionine = a ubiquinol + S-adenosyl-L-homocysteine + H(+). The enzyme catalyses a 3-(all-trans-polyprenyl)benzene-1,2-diol + S-adenosyl-L-methionine = a 2-methoxy-6-(all-trans-polyprenyl)phenol + S-adenosyl-L-homocysteine + H(+). It participates in cofactor biosynthesis; ubiquinone biosynthesis. Functionally, O-methyltransferase that catalyzes the 2 O-methylation steps in the ubiquinone biosynthetic pathway. The sequence is that of Ubiquinone biosynthesis O-methyltransferase from Brucella melitensis biotype 2 (strain ATCC 23457).